Here is a 735-residue protein sequence, read N- to C-terminus: Catalase-peroxidase (735 aa).

Positions Met-1–Gly-10 are enriched in polar residues. The segment at Met-1–Ser-20 is disordered. The tryptophyl-tyrosyl-methioninium (Trp-Tyr) (with M-254) cross-link spans Trp-100 to Tyr-228. His-101 serves as the catalytic Proton acceptor. The segment at residues Tyr-228–Met-254 is a cross-link (tryptophyl-tyrosyl-methioninium (Tyr-Met) (with W-100)). A heme b-binding site is contributed by His-269.

The protein belongs to the peroxidase family. Peroxidase/catalase subfamily. Homodimer or homotetramer. Heme b is required as a cofactor. In terms of processing, formation of the three residue Trp-Tyr-Met cross-link is important for the catalase, but not the peroxidase activity of the enzyme.

It carries out the reaction H2O2 + AH2 = A + 2 H2O. It catalyses the reaction 2 H2O2 = O2 + 2 H2O. Its function is as follows. Bifunctional enzyme with both catalase and broad-spectrum peroxidase activity. This chain is Catalase-peroxidase, found in Jannaschia sp. (strain CCS1).